We begin with the raw amino-acid sequence, 309 residues long: NAD kinase (309 aa).

Asp-89 serves as the catalytic Proton acceptor. NAD(+) contacts are provided by residues 89–90 (DG), 163–164 (NE), His-174, Arg-191, Asp-193, and 204–209 (TAYALS).

Belongs to the NAD kinase family. A divalent metal cation is required as a cofactor.

The protein localises to the cytoplasm. It catalyses the reaction NAD(+) + ATP = ADP + NADP(+) + H(+). In terms of biological role, involved in the regulation of the intracellular balance of NAD and NADP, and is a key enzyme in the biosynthesis of NADP. Catalyzes specifically the phosphorylation on 2'-hydroxyl of the adenosine moiety of NAD to yield NADP. The protein is NAD kinase of Shewanella sp. (strain MR-4).